The sequence spans 275 residues: Ribosomal RNA small subunit methyltransferase A (275 aa).

S-adenosyl-L-methionine contacts are provided by Asn-19, Leu-21, Gly-46, Glu-71, Asp-94, and Asn-117.

It belongs to the class I-like SAM-binding methyltransferase superfamily. rRNA adenine N(6)-methyltransferase family. RsmA subfamily.

The protein localises to the cytoplasm. The catalysed reaction is adenosine(1518)/adenosine(1519) in 16S rRNA + 4 S-adenosyl-L-methionine = N(6)-dimethyladenosine(1518)/N(6)-dimethyladenosine(1519) in 16S rRNA + 4 S-adenosyl-L-homocysteine + 4 H(+). Specifically dimethylates two adjacent adenosines (A1518 and A1519) in the loop of a conserved hairpin near the 3'-end of 16S rRNA in the 30S particle. May play a critical role in biogenesis of 30S subunits. The protein is Ribosomal RNA small subunit methyltransferase A of Burkholderia lata (strain ATCC 17760 / DSM 23089 / LMG 22485 / NCIMB 9086 / R18194 / 383).